We begin with the raw amino-acid sequence, 457 residues long: Carboxypeptidase N catalytic chain (457 aa).

An N-terminal signal peptide occupies residues 1-23 (MPDLPSAFLPLLLLSKFVTPVTF). One can recognise a Peptidase M14 domain in the interval 24–338 (RHHRYDDLVR…EALIQFLEQV (315 aa)). Cysteines 42 and 104 form a disulfide. Zn(2+) contacts are provided by His-86, Glu-89, and His-216. The cysteines at positions 271 and 311 are disulfide-linked. Catalysis depends on Glu-308, which acts as the Proton donor/acceptor. Residues Thr-400, Thr-402, and Thr-409 are each glycosylated (O-linked (GalNAc...) threonine). The interval 418–457 (STTQVHPVQKAPGRGQGSRAKQPRTSRKKDQAAKRHRGPA) is disordered.

It belongs to the peptidase M14 family. In terms of assembly, tetramer of two catalytic chains and two glycosylated inactive chains. The cofactor is Zn(2+). In terms of tissue distribution, plasma. Expressed in liver.

Its subcellular location is the secreted. The protein localises to the extracellular space. It carries out the reaction Release of a C-terminal basic amino acid, preferentially lysine.. Protects the body from potent vasoactive and inflammatory peptides containing C-terminal Arg or Lys (such as kinins or anaphylatoxins) which are released into the circulation. The protein is Carboxypeptidase N catalytic chain (Cpn1) of Rattus norvegicus (Rat).